A 308-amino-acid chain; its full sequence is Aspartate carbamoyltransferase catalytic subunit (308 aa).

Residues Arg57 and Thr58 each coordinate carbamoyl phosphate. An L-aspartate-binding site is contributed by Lys86. Carbamoyl phosphate-binding residues include Arg107, His135, and Gln138. L-aspartate-binding residues include Arg168 and Arg229. Positions 268 and 269 each coordinate carbamoyl phosphate.

It belongs to the aspartate/ornithine carbamoyltransferase superfamily. ATCase family. In terms of assembly, heterooligomer of catalytic and regulatory chains.

The catalysed reaction is carbamoyl phosphate + L-aspartate = N-carbamoyl-L-aspartate + phosphate + H(+). Its pathway is pyrimidine metabolism; UMP biosynthesis via de novo pathway; (S)-dihydroorotate from bicarbonate: step 2/3. Functionally, catalyzes the condensation of carbamoyl phosphate and aspartate to form carbamoyl aspartate and inorganic phosphate, the committed step in the de novo pyrimidine nucleotide biosynthesis pathway. This is Aspartate carbamoyltransferase catalytic subunit from Thermococcus gammatolerans (strain DSM 15229 / JCM 11827 / EJ3).